We begin with the raw amino-acid sequence, 2230 residues long: Golgin subfamily A member 4 (2230 aa).

The interval 1–64 is disordered; it reads MFKKLKQKIS…SGDTQSFAQK (64 aa). S10 carries the phosphoserine modification. Low complexity predominate over residues 12-41; that stretch reads EQQQLQQALAPAQASSNSSTPTRMRSRTSS. T39 is modified (phosphothreonine). S41, S71, S78, and S89 each carry phosphoserine. A compositionally biased stretch (basic and acidic residues) spans 87–107; that stretch reads SSSKESLVRTSSRESLNRLDL. A disordered region spans residues 87–127; that stretch reads SSSKESLVRTSSRESLNRLDLDSSTASFDPPSDMDSEAEDL. The tract at residues 133-203 is interaction with MACF1; sequence SLNKEQLIQR…EELQMDQQAK (71 aa). Positions 133–2185 form a coiled coil; it reads SLNKEQLIQR…EYLRKVLFEY (2053 aa). A Phosphoserine modification is found at S266. Residues N585 and N1612 are each glycosylated (N-linked (GlcNAc...) asparagine). The region spanning 2168–2215 is the GRIP domain; it reads LFGEPTEFEYLRKVLFEYMMGRETKTMAKVITTVLKFPDDQTQKILER. Residue T2223 is modified to Phosphothreonine.

In terms of assembly, homodimer. Interacts with RAB6A. Interacts with GTP-bound ARL1 and ARL3. Interacts with MACF1. Directly interacts with TBC1D23. Interacts with FAM91A1; this interaction may be mediated by TBC1D23.

The protein resides in the cytoplasm. It is found in the golgi apparatus membrane. Its subcellular location is the golgi apparatus. It localises to the trans-Golgi network membrane. In terms of biological role, involved in vesicular trafficking at the Golgi apparatus level. May play a role in delivery of transport vesicles containing GPI-linked proteins from the trans-Golgi network through its interaction with MACF1. Involved in endosome-to-Golgi trafficking. This chain is Golgin subfamily A member 4 (GOLGA4), found in Homo sapiens (Human).